A 215-amino-acid chain; its full sequence is Beta-crystallin A3-1 (215 aa).

The tract at residues 1–30 is N-terminal arm; the sequence is MEIPVDQTEREDITSEKMAQINPLPVHLGP. 2 Beta/gamma crystallin 'Greek key' domains span residues 31-70 and 71-117; these read WKIT…KVEC and GAWI…RPIC. The segment at 118-123 is connecting peptide; that stretch reads SANHIE. Beta/gamma crystallin 'Greek key' domains follow at residues 124-165 and 166-214; these read SKLV…KVQC and GAWV…RRIQ.

The protein belongs to the beta/gamma-crystallin family. In terms of assembly, homo/heterodimer, or complexes of higher-order. The structure of beta-crystallin oligomers seems to be stabilized through interactions between the N-terminal arms. Post-translationally, the N-terminus is blocked.

Functionally, crystallins are the dominant structural components of the vertebrate eye lens. This is Beta-crystallin A3-1 from Aquarana catesbeiana (American bullfrog).